The primary structure comprises 769 residues: TSC22 domain family protein 2 (769 aa).

Disordered stretches follow at residues 20–86, 224–292, 334–353, and 520–563; these read AQVA…TVSP, HGLD…PQPM, AQPG…YPQP, and VPAP…SLPQ. Acidic residues predominate over residues 28-37; that stretch reads EDTESLDDPD. The segment covering 229 to 252 has biased composition (polar residues); sequence GTDSSLTAVSQLPPSEKMSQPTLA. Over residues 269–279 the composition is skewed to low complexity; the sequence is GGAVAPSSASL. The span at 531 to 541 shows a compositional bias: low complexity; sequence SSHTPVSRSSS. A compositionally biased stretch (polar residues) spans 542 to 563; that stretch reads VIQQVGSPLAQGTHSAPTSLPQ. A coiled-coil region spans residues 691 to 725; that stretch reads MYAVREEVEVLKEQIKELVERNSLLERENALLKSL. The segment covering 726–745 has biased composition (polar residues); sequence SNNDQLSQLPAQQANPGSTS. A disordered region spans residues 726-769; that stretch reads SNNDQLSQLPAQQANPGSTSQQQAMIAQPPQPTQPPQQPNVSSA. Over residues 754-763 the composition is skewed to pro residues; it reads PPQPTQPPQQ.

This sequence belongs to the TSC-22/Dip/Bun family. As to quaternary structure, interacts with NRBP1. Interacts with PKM isoform M2; the interaction results in reduced nuclear levels of PKM isoform M2, leading to repression of cyclin CCND1 transcription and reduced cell growth. Interacts with WDR77. As to expression, expressed in the cortex, medulla and papilla of the kidney. Expressed in the kidney.

Functionally, reduces the level of nuclear PKM isoform M2 which results in repression of cyclin CCND1 transcription and reduced cell growth. In terms of biological role, may protect kidney cells from hyperosmotic stress. The polypeptide is TSC22 domain family protein 2 (Mus musculus (Mouse)).